We begin with the raw amino-acid sequence, 123 residues long: MPTIKQLIRNTRQPIRNVTKSPALGGCPQRRGTCTRVYTITPKKPNSALRKVARVRLTSGFEITAYIPGIGHNSQEHSVVLVRGGRVKDLPGVRYHIVRGTLDAVGVKDRQQGRSKYGVKKPK.

The protein belongs to the universal ribosomal protein uS12 family. In terms of assembly, part of the 30S ribosomal subunit.

It localises to the plastid. The protein localises to the chloroplast. With S4 and S5 plays an important role in translational accuracy. Located at the interface of the 30S and 50S subunits. In Populus alba (White poplar), this protein is Small ribosomal subunit protein uS12cz/uS12cy (rps12-A).